Here is a 130-residue protein sequence, read N- to C-terminus: Small ribosomal subunit protein uS8 (130 aa).

This sequence belongs to the universal ribosomal protein uS8 family. Part of the 30S ribosomal subunit.

One of the primary rRNA binding proteins, it binds directly to 16S rRNA central domain where it helps coordinate assembly of the platform of the 30S subunit. In Pyrobaculum neutrophilum (strain DSM 2338 / JCM 9278 / NBRC 100436 / V24Sta) (Thermoproteus neutrophilus), this protein is Small ribosomal subunit protein uS8.